The sequence spans 85 residues: Cloacin immunity protein (85 aa).

K12 carries the N6-methyllysine modification.

Belongs to the cloacin immunity protein family.

This protein complexes with cloacin protein in equimolar amounts and inhibits it by binding with high affinity to the C-terminal catalytic domain of cloacin. This is Cloacin immunity protein (cim) from Escherichia coli.